Reading from the N-terminus, the 294-residue chain is Putative cuticle collagen 145 (294 aa).

Positions 1–30 (MEKILVTFSTGAASIAVLAVLFTVPSLYNT) are cleaved as a signal peptide. Residues 100–112 (TCPPGPPGPPGQP) are compositionally biased toward pro residues. Disordered stretches follow at residues 100-133 (TCPP…ATFA) and 148-276 (PQGP…LPGN). 2 triple-helical region regions span residues 102 to 127 (PPGP…KGDD) and 148 to 277 (PQGP…PGND). 2 stretches are compositionally biased toward low complexity: residues 164 to 194 (AGPD…NGQP) and 219 to 265 (APGA…DGQP). One can recognise a Collagen-like domain in the interval 218–276 (GAPGAPGNAGPAGPAGQDGFPGQDGAPGPAGPAGQDGFPGNAGSDGQPGAPGGPGLPGN).

The protein belongs to the cuticular collagen family. In terms of assembly, collagen polypeptide chains are complexed within the cuticle by disulfide bonds and other types of covalent cross-links.

Nematode cuticles are composed largely of collagen-like proteins. The cuticle functions both as an exoskeleton and as a barrier to protect the worm from its environment. The chain is Putative cuticle collagen 145 (col-145) from Caenorhabditis elegans.